Reading from the N-terminus, the 85-residue chain is ATP synthase epsilon chain (85 aa).

The protein belongs to the ATPase epsilon chain family. In terms of assembly, F-type ATPases have 2 components, CF(1) - the catalytic core - and CF(0) - the membrane proton channel. CF(1) has five subunits: alpha(3), beta(3), gamma(1), delta(1), epsilon(1). CF(0) has three main subunits: a, b and c.

It is found in the cell membrane. In terms of biological role, produces ATP from ADP in the presence of a proton gradient across the membrane. The polypeptide is ATP synthase epsilon chain (Frankia casuarinae (strain DSM 45818 / CECT 9043 / HFP020203 / CcI3)).